The primary structure comprises 307 residues: 4-hydroxy-tetrahydrodipicolinate synthase (307 aa).

A pyruvate-binding site is contributed by Ser-57. Tyr-145 functions as the Proton donor/acceptor in the catalytic mechanism. Catalysis depends on Lys-173, which acts as the Schiff-base intermediate with substrate. Ile-219 contributes to the pyruvate binding site.

The protein belongs to the DapA family. As to quaternary structure, homotetramer; dimer of dimers.

The protein resides in the cytoplasm. It carries out the reaction L-aspartate 4-semialdehyde + pyruvate = (2S,4S)-4-hydroxy-2,3,4,5-tetrahydrodipicolinate + H2O + H(+). Its pathway is amino-acid biosynthesis; L-lysine biosynthesis via DAP pathway; (S)-tetrahydrodipicolinate from L-aspartate: step 3/4. Functionally, catalyzes the condensation of (S)-aspartate-beta-semialdehyde [(S)-ASA] and pyruvate to 4-hydroxy-tetrahydrodipicolinate (HTPA). The chain is 4-hydroxy-tetrahydrodipicolinate synthase from Polynucleobacter asymbioticus (strain DSM 18221 / CIP 109841 / QLW-P1DMWA-1) (Polynucleobacter necessarius subsp. asymbioticus).